A 146-amino-acid chain; its full sequence is UPF0735 ACT domain-containing protein TTE2621 (146 aa).

The 76-residue stretch at 71 to 146 (TFSMVLEHMP…GVRKIEVLGE (76 aa)) folds into the ACT domain.

The protein belongs to the UPF0735 family.

The protein is UPF0735 ACT domain-containing protein TTE2621 of Caldanaerobacter subterraneus subsp. tengcongensis (strain DSM 15242 / JCM 11007 / NBRC 100824 / MB4) (Thermoanaerobacter tengcongensis).